Consider the following 128-residue polypeptide: MSDFKVPPKAKGFKRLFKALFYSKDGLKCAWAEESAFRQIVILALFCIVLASYLTKDFLEWGLLILPCFLSVVIELINSSIEKAVDFTGTEFHPLAKKAKDMASSAQLIGLIFWAFIWGRYLLTLYFN.

E34 serves as a coordination point for a divalent metal cation. 2 helical membrane passes run 35-55 (SAFR…SYLT) and 58-78 (FLEW…ELIN). E75 serves as the catalytic Proton acceptor. An a divalent metal cation-binding site is contributed by E82. The chain crosses the membrane as a helical span at residues 108–128 (LIGLIFWAFIWGRYLLTLYFN).

It belongs to the bacterial diacylglycerol kinase family. Mg(2+) is required as a cofactor.

It localises to the cell inner membrane. The catalysed reaction is a 1,2-diacyl-sn-glycerol + ATP = a 1,2-diacyl-sn-glycero-3-phosphate + ADP + H(+). Functionally, catalyzes the ATP-dependent phosphorylation of sn-l,2-diacylglycerol (DAG) to phosphatidic acid. Involved in the recycling of diacylglycerol produced as a by-product during membrane-derived oligosaccharide (MDO) biosynthesis. The protein is Diacylglycerol kinase (dgkA) of Helicobacter pylori (strain J99 / ATCC 700824) (Campylobacter pylori J99).